The primary structure comprises 201 residues: Lipopolysaccharide core heptose(II)-phosphate phosphatase (201 aa).

The signal sequence occupies residues 1 to 35 (MLAFILRFIKNKSYFALLAGAWVIIAGLTSQHAWS).

This sequence belongs to the phosphoglycerate mutase family. Ais subfamily.

The protein localises to the periplasm. It participates in bacterial outer membrane biogenesis; lipopolysaccharide metabolism. Functionally, catalyzes the dephosphorylation of heptose(II) of the outer membrane lipopolysaccharide core. The polypeptide is Lipopolysaccharide core heptose(II)-phosphate phosphatase (Salmonella arizonae (strain ATCC BAA-731 / CDC346-86 / RSK2980)).